Reading from the N-terminus, the 85-residue chain is Colicin-E8 immunity protein in ColE6 (85 aa).

It belongs to the colicins ColE2/ColE8/ColE9 and pyocins S1/S2 family.

This Escherichia coli protein is Colicin-E8 immunity protein in ColE6 (imm).